A 62-amino-acid polypeptide reads, in one-letter code: MTMSRNGKTNKAAYSQRFTRCSVAVAATRSASVVAAAFDFYICIIISTLLSLIVSLASQLLF.

Transmembrane regions (helical) follow at residues Val-23 to Asp-39 and Val-33 to Ile-53.

It belongs to the CYSTM1 family. Heterodimers. Binds weakly to CYSTM7 and WIH1/CYSTM13. As to expression, mostly expressed in stems, siliques, leaves and flowers and, to a lower extent, in roots.

Its subcellular location is the cell membrane. It localises to the nucleus. The protein localises to the secreted. It is found in the cell wall. Its function is as follows. Involved in resistance to abiotic stress. Functionally, confers resistance to heavy metal ions (e.g. cadmium (CdCl(2)) and copper (CuCl(2))) by chelating them at the plasma membrane of root cells, thus stopping their entry and reducing their accumulation. This Arabidopsis thaliana (Mouse-ear cress) protein is Protein CYSTEINE-RICH TRANSMEMBRANE MODULE 2.